The following is a 374-amino-acid chain: Serine/threonine-protein kinase-transforming protein mos (374 aa).

One can recognise a Protein kinase domain in the interval 94 to 370 (VCLMHRLGSG…LLQRDLKAFR (277 aa)). Residues 100-108 (LGSGGFGSV) and Lys-121 contribute to the ATP site. Asp-229 (proton acceptor) is an active-site residue.

The protein belongs to the protein kinase superfamily. Ser/Thr protein kinase family.

It catalyses the reaction L-seryl-[protein] + ATP = O-phospho-L-seryl-[protein] + ADP + H(+). The catalysed reaction is L-threonyl-[protein] + ATP = O-phospho-L-threonyl-[protein] + ADP + H(+). The chain is Serine/threonine-protein kinase-transforming protein mos (V-MOS) from Mus musculus (Mouse).